We begin with the raw amino-acid sequence, 156 residues long: Small ribosomal subunit protein uS7 (156 aa).

It belongs to the universal ribosomal protein uS7 family. Part of the 30S ribosomal subunit. Contacts proteins S9 and S11.

Functionally, one of the primary rRNA binding proteins, it binds directly to 16S rRNA where it nucleates assembly of the head domain of the 30S subunit. Is located at the subunit interface close to the decoding center, probably blocks exit of the E-site tRNA. This is Small ribosomal subunit protein uS7 from Lactobacillus helveticus (strain DPC 4571).